A 457-amino-acid polypeptide reads, in one-letter code: uncharacterized protein (457 aa).

The next 12 membrane-spanning stretches (helical) occupy residues 18 to 38 (VMTV…PYLV), 44 to 64 (GAYV…MILV), 101 to 121 (MGLL…GWVI), 158 to 178 (IIFY…KGII), 188 to 208 (LMPL…TLPG), 228 to 248 (LFIF…GVLI), 273 to 293 (IIAV…GIEP), 294 to 314 (NAGP…LWAG), 316 to 336 (FFAI…SITI), 355 to 375 (AIVL…ILGD), 396 to 416 (SGNI…GFVL), and 433 to 453 (IKIW…VIFI).

Belongs to the sodium:neurotransmitter symporter (SNF) (TC 2.A.22) family.

It is found in the cell membrane. In terms of biological role, putative sodium-dependent transporter. This is an uncharacterized protein from Haemophilus influenzae (strain ATCC 51907 / DSM 11121 / KW20 / Rd).